We begin with the raw amino-acid sequence, 598 residues long: 2-succinyl-5-enolpyruvyl-6-hydroxy-3-cyclohexene-1-carboxylate synthase (598 aa).

The protein belongs to the TPP enzyme family. MenD subfamily. As to quaternary structure, homodimer. Requires Mg(2+) as cofactor. The cofactor is Mn(2+). It depends on thiamine diphosphate as a cofactor.

It carries out the reaction isochorismate + 2-oxoglutarate + H(+) = 5-enolpyruvoyl-6-hydroxy-2-succinyl-cyclohex-3-ene-1-carboxylate + CO2. It functions in the pathway quinol/quinone metabolism; 1,4-dihydroxy-2-naphthoate biosynthesis; 1,4-dihydroxy-2-naphthoate from chorismate: step 2/7. Its pathway is cofactor biosynthesis; phylloquinone biosynthesis. Catalyzes the thiamine diphosphate-dependent decarboxylation of 2-oxoglutarate and the subsequent addition of the resulting succinic semialdehyde-thiamine pyrophosphate anion to isochorismate to yield 2-succinyl-5-enolpyruvyl-6-hydroxy-3-cyclohexene-1-carboxylate (SEPHCHC). The protein is 2-succinyl-5-enolpyruvyl-6-hydroxy-3-cyclohexene-1-carboxylate synthase of Prochlorococcus marinus (strain NATL1A).